We begin with the raw amino-acid sequence, 229 residues long: Triosephosphate isomerase (229 aa).

Substrate is bound at residue 6–8 (NLK). His-85 acts as the Electrophile in catalysis. The active-site Proton acceptor is Glu-152. Substrate-binding residues include Gly-158 and Ser-188.

Belongs to the triosephosphate isomerase family. Homodimer.

It localises to the cytoplasm. It catalyses the reaction D-glyceraldehyde 3-phosphate = dihydroxyacetone phosphate. It participates in carbohydrate biosynthesis; gluconeogenesis. It functions in the pathway carbohydrate degradation; glycolysis; D-glyceraldehyde 3-phosphate from glycerone phosphate: step 1/1. Involved in the gluconeogenesis. Catalyzes stereospecifically the conversion of dihydroxyacetone phosphate (DHAP) to D-glyceraldehyde-3-phosphate (G3P). The chain is Triosephosphate isomerase from Campylobacter curvus (strain 525.92).